We begin with the raw amino-acid sequence, 523 residues long: 2-isopropylmalate synthase (523 aa).

Residues 5-267 (VIIFDTTLRD…HTAINHQEIW (263 aa)) form the Pyruvate carboxyltransferase domain. Positions 14, 202, 204, and 238 each coordinate Mn(2+). Residues 392-523 (RLDYFSVQSG…QHNENNKETV (132 aa)) form a regulatory domain region.

This sequence belongs to the alpha-IPM synthase/homocitrate synthase family. LeuA type 1 subfamily. Homodimer. The cofactor is Mn(2+).

It localises to the cytoplasm. It catalyses the reaction 3-methyl-2-oxobutanoate + acetyl-CoA + H2O = (2S)-2-isopropylmalate + CoA + H(+). It functions in the pathway amino-acid biosynthesis; L-leucine biosynthesis; L-leucine from 3-methyl-2-oxobutanoate: step 1/4. Its function is as follows. Catalyzes the condensation of the acetyl group of acetyl-CoA with 3-methyl-2-oxobutanoate (2-ketoisovalerate) to form 3-carboxy-3-hydroxy-4-methylpentanoate (2-isopropylmalate). The protein is 2-isopropylmalate synthase of Escherichia coli O127:H6 (strain E2348/69 / EPEC).